The following is a 214-amino-acid chain: Nascent polypeptide-associated complex subunit alpha (214 aa).

2 disordered regions span residues 1–57 (MSNP…NEKK) and 119–179 (ASAA…EDKD). Residues 22–38 (AEDEGSDSSDSEGEGEV) are compositionally biased toward acidic residues. Positions 52-117 (SRNEKKARKS…AKIEDLNSQA (66 aa)) constitute an NAC-A/B domain. A compositionally biased stretch (low complexity) spans 119–128 (ASAAAQLAAQ). Positions 129 to 159 (ESHDHAGHDHSGHDHSHDHGKGKAVDTGDEK) are enriched in basic and acidic residues. A compositionally biased stretch (acidic residues) spans 160 to 171 (KEEEEDDTEEVD). One can recognise a UBA domain in the interval 175 to 214 (LEDKDIELVMTQASVSRNKAVKALKENDNDIVNSIMALSI).

The protein belongs to the NAC-alpha family. As to quaternary structure, part of the nascent polypeptide-associated complex (NAC), consisting of EGD2 and EGD1. NAC associates with ribosomes via EGD1.

Its subcellular location is the cytoplasm. It is found in the nucleus. Component of the nascent polypeptide-associated complex (NAC), a dynamic component of the ribosomal exit tunnel, protecting the emerging polypeptides from interaction with other cytoplasmic proteins to ensure appropriate nascent protein targeting. The NAC complex also promotes mitochondrial protein import by enhancing productive ribosome interactions with the outer mitochondrial membrane and blocks the inappropriate interaction of ribosomes translating non-secretory nascent polypeptides with translocation sites in the membrane of the endoplasmic reticulum. EGD2 may also be involved in transcription regulation. This is Nascent polypeptide-associated complex subunit alpha (egd2) from Sclerotinia sclerotiorum (strain ATCC 18683 / 1980 / Ss-1) (White mold).